A 105-amino-acid polypeptide reads, in one-letter code: Urease subunit beta (105 aa).

This sequence belongs to the urease beta subunit family. Heterotrimer of UreA (gamma), UreB (beta) and UreC (alpha) subunits. Three heterotrimers associate to form the active enzyme.

It is found in the cytoplasm. It catalyses the reaction urea + 2 H2O + H(+) = hydrogencarbonate + 2 NH4(+). Its pathway is nitrogen metabolism; urea degradation; CO(2) and NH(3) from urea (urease route): step 1/1. The chain is Urease subunit beta from Prochlorococcus marinus (strain MIT 9313).